The sequence spans 185 residues: Large ribosomal subunit protein bL25 (185 aa).

This sequence belongs to the bacterial ribosomal protein bL25 family. CTC subfamily. As to quaternary structure, part of the 50S ribosomal subunit; part of the 5S rRNA/L5/L18/L25 subcomplex. Contacts the 5S rRNA. Binds to the 5S rRNA independently of L5 and L18.

Its function is as follows. This is one of the proteins that binds to the 5S RNA in the ribosome where it forms part of the central protuberance. This Laribacter hongkongensis (strain HLHK9) protein is Large ribosomal subunit protein bL25.